The following is a 263-amino-acid chain: Probable septum site-determining protein MinC (263 aa).

Residues Leu107–Val159 are disordered. Basic and acidic residues-rich tracts occupy residues Ala112–Glu129 and Ala138–Ala150.

Belongs to the MinC family. As to quaternary structure, interacts with MinD and FtsZ.

Cell division inhibitor that blocks the formation of polar Z ring septums. Rapidly oscillates between the poles of the cell to destabilize FtsZ filaments that have formed before they mature into polar Z rings. Prevents FtsZ polymerization. The protein is Probable septum site-determining protein MinC of Pseudomonas aeruginosa (strain UCBPP-PA14).